We begin with the raw amino-acid sequence, 403 residues long: Tryptophan synthase beta chain (403 aa).

K96 bears the N6-(pyridoxal phosphate)lysine mark.

Belongs to the TrpB family. Tetramer of two alpha and two beta chains. It depends on pyridoxal 5'-phosphate as a cofactor.

The catalysed reaction is (1S,2R)-1-C-(indol-3-yl)glycerol 3-phosphate + L-serine = D-glyceraldehyde 3-phosphate + L-tryptophan + H2O. The protein operates within amino-acid biosynthesis; L-tryptophan biosynthesis; L-tryptophan from chorismate: step 5/5. The beta subunit is responsible for the synthesis of L-tryptophan from indole and L-serine. The sequence is that of Tryptophan synthase beta chain from Ralstonia nicotianae (strain ATCC BAA-1114 / GMI1000) (Ralstonia solanacearum).